We begin with the raw amino-acid sequence, 307 residues long: Aspartate carbamoyltransferase catalytic subunit (307 aa).

Residues Arg54 and Thr55 each coordinate carbamoyl phosphate. Residue Lys83 coordinates L-aspartate. Positions 104, 132, and 135 each coordinate carbamoyl phosphate. Residues Arg165 and Arg228 each contribute to the L-aspartate site. 2 residues coordinate carbamoyl phosphate: Leu267 and Pro268.

The protein belongs to the aspartate/ornithine carbamoyltransferase superfamily. ATCase family. In terms of assembly, heterododecamer (2C3:3R2) of six catalytic PyrB chains organized as two trimers (C3), and six regulatory PyrI chains organized as three dimers (R2).

The catalysed reaction is carbamoyl phosphate + L-aspartate = N-carbamoyl-L-aspartate + phosphate + H(+). Its pathway is pyrimidine metabolism; UMP biosynthesis via de novo pathway; (S)-dihydroorotate from bicarbonate: step 2/3. Its function is as follows. Catalyzes the condensation of carbamoyl phosphate and aspartate to form carbamoyl aspartate and inorganic phosphate, the committed step in the de novo pyrimidine nucleotide biosynthesis pathway. This chain is Aspartate carbamoyltransferase catalytic subunit, found in Clostridium botulinum (strain Alaska E43 / Type E3).